The sequence spans 185 residues: Ribosome-recycling factor (185 aa).

This sequence belongs to the RRF family.

Its subcellular location is the cytoplasm. Functionally, responsible for the release of ribosomes from messenger RNA at the termination of protein biosynthesis. May increase the efficiency of translation by recycling ribosomes from one round of translation to another. This Pseudomonas putida (strain ATCC 700007 / DSM 6899 / JCM 31910 / BCRC 17059 / LMG 24140 / F1) protein is Ribosome-recycling factor.